A 179-amino-acid polypeptide reads, in one-letter code: Inner membrane-spanning protein YciB (179 aa).

5 helical membrane passes run 22 to 42, 50 to 70, 76 to 96, 121 to 141, and 149 to 169; these read IYVASGALIVATALALVFTWF, MTLITFLMVLVFGTLTLVFHN, WKVTIIYTLFALALLISQLVL, LAWAVFFLVCGLANIYVAFWL, and FKVFGLTALTLVFTLLSGVYI.

Belongs to the YciB family.

It is found in the cell inner membrane. Plays a role in cell envelope biogenesis, maintenance of cell envelope integrity and membrane homeostasis. The chain is Inner membrane-spanning protein YciB from Serratia proteamaculans (strain 568).